Reading from the N-terminus, the 712-residue chain is Polyphosphate kinase (712 aa).

An ATP-binding site is contributed by Asn49. The Mg(2+) site is built by Arg398 and Arg428. Catalysis depends on His458, which acts as the Phosphohistidine intermediate. ATP-binding residues include Tyr491, Arg587, and His615.

It belongs to the polyphosphate kinase 1 (PPK1) family. It depends on Mg(2+) as a cofactor. An intermediate of this reaction is the autophosphorylated ppk in which a phosphate is covalently linked to a histidine residue through a N-P bond.

The catalysed reaction is [phosphate](n) + ATP = [phosphate](n+1) + ADP. Its function is as follows. Catalyzes the reversible transfer of the terminal phosphate of ATP to form a long-chain polyphosphate (polyP). This is Polyphosphate kinase from Parasynechococcus marenigrum (strain WH8102).